A 444-amino-acid chain; its full sequence is D(2) dopamine receptor (444 aa).

Residues 1–37 (MDPLNLSWYDDDPESRNWSRPFNGSEGKADRPPYNYY) lie on the Extracellular side of the membrane. N-linked (GlcNAc...) asparagine glycans are attached at residues N5, N17, and N23. A helical membrane pass occupies residues 38-60 (AMLLTLLIFVIVFGNVLVCMAVS). At 61-70 (REKALQTTTN) the chain is on the cytoplasmic side. The chain crosses the membrane as a helical span at residues 71-93 (YLIVSLAVADLLVATLVMPWVVY). The Extracellular segment spans residues 94–108 (LEVVGEWKFSRIHCD). Cysteines 107 and 182 form a disulfide. The helical transmembrane segment at 109-130 (IFVTLDVMMCTASILNLCAISI) threads the bilayer. At 131–151 (DRYTAVAMPMLYNTRYSSKRR) the chain is on the cytoplasmic side. Residues 152–172 (VTVMIAIVWVLSFTISCPMLF) form a helical membrane-spanning segment. Topologically, residues 173–188 (GLNNTDQNECIIANPA) are extracellular. The helical transmembrane segment at 189–213 (FVVYSSIVSFYVPFIVTLLVYIKIY) threads the bilayer. Residues 211–374 (KIYIVLRRRR…SQQKEKKATQ (164 aa)) are interaction with PPP1R9B. At 214 to 374 (IVLRRRRKRV…SQQKEKKATQ (161 aa)) the chain is on the cytoplasmic side. The interval 281 to 332 (MEMLSSTSPPERTRYSPIPPSHHQLTLPDPSHHGLHSTPDSPAKPEKNGHAK) is disordered. A helical transmembrane segment spans residues 375–396 (MLAIVLGVFIICWLPFFITHIL). Residues 397-410 (NIHCDCNIPPVLYS) are Extracellular-facing. Cysteines 400 and 402 form a disulfide. The chain crosses the membrane as a helical span at residues 411–432 (AFTWLGYVNSAVNPIIYTTFNI). Topologically, residues 433 to 444 (EFRKAFLKILHC) are cytoplasmic. Residue C444 is the site of S-palmitoyl cysteine attachment.

It belongs to the G-protein coupled receptor 1 family. Forms homo- and heterooligomers with DRD4. The interaction with DRD4 may modulate agonist-induced downstream signaling. Interacts with CADPS and CADPS2. Interacts with GPRASP1, PPP1R9B and CLIC6. Interacts with ARRB2. Interacts with HTR2A. Interacts with DRD1. Interacts with KCNA2. Palmitoylated. Palmitoylation which is required for proper localization to the plasma membrane and stability of the receptor could be carried on by ZDHHC4, ZDHHC3 and ZDHHC8.

It localises to the cell membrane. It is found in the golgi apparatus membrane. Dopamine receptor whose activity is mediated by G proteins which inhibit adenylyl cyclase. Positively regulates postnatal regression of retinal hyaloid vessels via suppression of VEGFR2/KDR activity, downstream of OPN5. The chain is D(2) dopamine receptor (DRD2) from Bos taurus (Bovine).